The sequence spans 291 residues: N-acetylmannosamine kinase (291 aa).

Residues 5–12 (AIDIGGTK) and 132–139 (GVGGGVVC) contribute to the ATP site. Zn(2+) contacts are provided by H156, C166, C168, and C173.

It belongs to the ROK (NagC/XylR) family. NanK subfamily. Homodimer.

The enzyme catalyses an N-acyl-D-mannosamine + ATP = an N-acyl-D-mannosamine 6-phosphate + ADP + H(+). It functions in the pathway amino-sugar metabolism; N-acetylneuraminate degradation; D-fructose 6-phosphate from N-acetylneuraminate: step 2/5. Functionally, catalyzes the phosphorylation of N-acetylmannosamine (ManNAc) to ManNAc-6-P. This chain is N-acetylmannosamine kinase, found in Salmonella arizonae (strain ATCC BAA-731 / CDC346-86 / RSK2980).